A 256-amino-acid chain; its full sequence is METYVNKLHEGSTYTAAVQYNVLEKDDDPASLTIWVPMFQSSMPADLLIKELANVNILVKQISTPKGPSLRVMINSRSALLAQMPSKFTICANVSLDERSKLAYDVTTPCEIKACSLTCLKSKNMLTTVKDLTMKTLNPTHDIIALCEFENIVTSKKVIIPTYLRSISVRNKDLNTLENITTTEFKNAITNAKIIPYSGLLLVITVTDNKGAFKYIKPQSQFIVDLGAYLEKESIYYVTTNWKHTATRFAIKPMED.

The interaction with M2-1 stretch occupies residues 1–110; that stretch reads METYVNKLHE…KLAYDVTTPC (110 aa). A nuclear targeting and binding to host importin KPNB1 region spans residues 110–183; that stretch reads CEIKACSLTC…LNTLENITTT (74 aa). The Nuclear export signal signature appears at 194 to 206; the sequence is IIPYSGLLLVITV. At Thr-205 the chain carries Phosphothreonine.

Belongs to the pneumovirinae M protein family. As to quaternary structure, forms dimers. Forms higher-order oligomers. Interacts with glycoprotein G (via N-terminus). Interacts with protein M2-1; this interaction directs the matrix protein localization to cytoplasmic inclusions comprising viral proteins L, N, P, and M2-1 and mediates the matrix protein association with the nucleocapsid. Interacts with host importin KPNB1; this interaction mediates nuclear import of the matrix protein early during infection. Interacts with host AP3M1; this interaction plays an essential role in trafficking the matrix protein in host cells. Interacts with host CAV1; this interaction probably facilitates viral budding. Interacts with host CFL1; this interaction probably facilitates viral replication. Interacts with host ZNF502; this interaction probably facilitates viral release. Interacts with host RACK1. Phosphorylation is important for oligomerization.

It localises to the virion. The protein resides in the host cytoplasm. It is found in the host nucleus. Its subcellular location is the host cell membrane. In terms of biological role, plays a crucial role in virus assembly into filaments and budding. Early in infection, localizes in the nucleus where it inhibits host cell transcription through direct binding to host chromatin. Later in infection, traffics to the cytoplasm through the action of host CRM1 to associate with inclusion bodies, the site of viral transcription and replication. During virus assembly and budding, acts as a bridge between the nucleocapsid and the lipid bilayer. Also plays a role in the inhibition of host interferon-beta response in a RACK1-dependent manner. This chain is Matrix protein (M), found in Homo sapiens (Human).